The following is a 444-amino-acid chain: UDP-N-acetylmuramate--L-alanine ligase (444 aa).

Residue Gly110–Ser116 participates in ATP binding.

It belongs to the MurCDEF family.

Its subcellular location is the cytoplasm. It carries out the reaction UDP-N-acetyl-alpha-D-muramate + L-alanine + ATP = UDP-N-acetyl-alpha-D-muramoyl-L-alanine + ADP + phosphate + H(+). It participates in cell wall biogenesis; peptidoglycan biosynthesis. Functionally, cell wall formation. This Streptococcus pneumoniae (strain JJA) protein is UDP-N-acetylmuramate--L-alanine ligase.